The following is a 374-amino-acid chain: UPF0754 membrane protein SAB1779c (374 aa).

2 consecutive transmembrane segments (helical) span residues 4-24 and 354-374; these read LFII…TNVI and SLGF…AIFV.

Belongs to the UPF0754 family.

It localises to the cell membrane. The polypeptide is UPF0754 membrane protein SAB1779c (Staphylococcus aureus (strain bovine RF122 / ET3-1)).